Reading from the N-terminus, the 79-residue chain is Beta-defensin 15 (79 aa).

The signal sequence occupies residues 1-20 (MKTFLFLFAVFFFLDPAKNA). Disulfide bonds link Cys-26–Cys-53, Cys-33–Cys-47, and Cys-37–Cys-54.

Belongs to the beta-defensin family.

It is found in the secreted. In terms of biological role, has antibacterial activity. This is Beta-defensin 15 (Defb15) from Rattus norvegicus (Rat).